The sequence spans 152 residues: Perlwapin (152 aa).

A signal peptide spans Leu1–Gly18. The 43-residue stretch at Tyr19 to Val61 folds into the WAP 1 domain. Cystine bridges form between Cys26–Cys52, Cys35–Cys56, Cys39–Cys51, Cys45–Cys60, Cys69–Cys95, Cys77–Cys100, Cys82–Cys94, Cys88–Cys103, Cys112–Cys139, Cys122–Cys142, Cys126–Cys138, and Cys132–Cys146. The WAP 2; atypical domain maps to Pro62–Lys107. In terms of domain architecture, WAP 3 spans Lys108–Cys150.

As to expression, component of the acid-soluble and acid-insoluble organic matrix of prismatic shell layers (at protein level).

Its subcellular location is the secreted. In terms of biological role, inhibits growth of calcium carbonate crystals. May inhibit growth of certain crystallographic planes in the mineral phase of nacre in the shell. The polypeptide is Perlwapin (Haliotis asinina (Donkey's ear abalone)).